Reading from the N-terminus, the 40-residue chain is Alpha-conotoxin-like Qc1.1c (40 aa).

Residues 1–19 (SDGRNTAANDKASNLMALR) constitute a propeptide that is removed on maturation. Disulfide bonds link cysteine 22-cysteine 28 and cysteine 23-cysteine 36. Residues 24–26 (PNP) are lacks the Ser-Xaa-Pro motif that is crucial for potent interaction with nAChR.

This sequence belongs to the conotoxin A superfamily. In terms of tissue distribution, expressed by the venom duct.

The protein localises to the secreted. In terms of biological role, alpha-conotoxins act on postsynaptic membranes, they bind to the nicotinic acetylcholine receptors (nAChR) and thus inhibit them. Has possibly a distinct nAChR binding mode from other alpha-conotoxins, due to a different three residue motif (lacks the Ser-Xaa-Pro motif). The protein is Alpha-conotoxin-like Qc1.1c of Conus quercinus (Oak cone).